The chain runs to 337 residues: 1-aminocyclopropane-1-carboxylate deaminase (337 aa).

Lys-50 is modified (N6-(pyridoxal phosphate)lysine). The active-site Nucleophile is Ser-77.

Belongs to the ACC deaminase/D-cysteine desulfhydrase family. In terms of assembly, homotrimer. The cofactor is pyridoxal 5'-phosphate.

It catalyses the reaction 1-aminocyclopropane-1-carboxylate + H2O = 2-oxobutanoate + NH4(+). Its function is as follows. Catalyzes a cyclopropane ring-opening reaction, the irreversible conversion of 1-aminocyclopropane-1-carboxylate (ACC) to ammonia and alpha-ketobutyrate. Allows growth on ACC as a nitrogen source. In Rhizobium radiobacter (Agrobacterium tumefaciens), this protein is 1-aminocyclopropane-1-carboxylate deaminase.